We begin with the raw amino-acid sequence, 85 residues long: Large ribosomal subunit protein eL34 (85 aa).

The protein belongs to the eukaryotic ribosomal protein eL34 family.

This is Large ribosomal subunit protein eL34 from Saccharolobus islandicus (strain Y.N.15.51 / Yellowstone #2) (Sulfolobus islandicus).